The following is a 256-amino-acid chain: 5'-nucleotidase SurE (256 aa).

Positions 9, 10, 42, and 99 each coordinate a divalent metal cation.

It belongs to the SurE nucleotidase family. A divalent metal cation serves as cofactor.

It localises to the cytoplasm. It catalyses the reaction a ribonucleoside 5'-phosphate + H2O = a ribonucleoside + phosphate. In terms of biological role, nucleotidase that shows phosphatase activity on nucleoside 5'-monophosphates. In Symbiobacterium thermophilum (strain DSM 24528 / JCM 14929 / IAM 14863 / T), this protein is 5'-nucleotidase SurE.